The primary structure comprises 372 residues: Bifunctional coenzyme PQQ synthesis protein C/D (372 aa).

The segment at 1–267 is pqqC; sequence MTAQFPPPVP…VAETNSAEDS (267 aa). A disordered region spans residues 260–288; sequence ETNSAEDSPAAAASPAATTAEPTAFSGSD. Residues 264-283 show a composition bias toward low complexity; sequence AEDSPAAAASPAATTAEPTA. The linker stretch occupies residues 268 to 280; it reads PAAAASPAATTAE. The pqqD stretch occupies residues 281–372; that stretch reads PTAFSGSDVP…GLAQKRVLER (92 aa).

In the N-terminal section; belongs to the PqqC family. This sequence in the C-terminal section; belongs to the PqqD family. In terms of assembly, monomer. Interacts with PqqE.

It carries out the reaction 6-(2-amino-2-carboxyethyl)-7,8-dioxo-1,2,3,4,7,8-hexahydroquinoline-2,4-dicarboxylate + 3 O2 = pyrroloquinoline quinone + 2 H2O2 + 2 H2O + H(+). It participates in cofactor biosynthesis; pyrroloquinoline quinone biosynthesis. Functionally, the PqqC region is involved in ring cyclization and eight-electron oxidation of 3a-(2-amino-2-carboxyethyl)-4,5-dioxo-4,5,6,7,8,9-hexahydroquinoline-7,9-dicarboxylic-acid to PQQ. The PqqD region functions as a PqqA binding domain and presents PqqA to PqqE. This is Bifunctional coenzyme PQQ synthesis protein C/D (pqqCD) from Methylorubrum extorquens (strain ATCC 14718 / DSM 1338 / JCM 2805 / NCIMB 9133 / AM1) (Methylobacterium extorquens).